Reading from the N-terminus, the 154-residue chain is NADPH-dependent 7-cyano-7-deazaguanine reductase (154 aa).

Over residues Met-1 to Ser-21 the composition is skewed to polar residues. Residues Met-1–Glu-28 form a disordered region. Residue Cys-52 is the Thioimide intermediate of the active site. The Proton donor role is filled by Asp-59. Substrate contacts are provided by residues Val-74 to Ser-76 and His-93 to Glu-94.

The protein belongs to the GTP cyclohydrolase I family. QueF type 1 subfamily.

It is found in the cytoplasm. The enzyme catalyses 7-aminomethyl-7-carbaguanine + 2 NADP(+) = 7-cyano-7-deazaguanine + 2 NADPH + 3 H(+). It functions in the pathway tRNA modification; tRNA-queuosine biosynthesis. Catalyzes the NADPH-dependent reduction of 7-cyano-7-deazaguanine (preQ0) to 7-aminomethyl-7-deazaguanine (preQ1). This chain is NADPH-dependent 7-cyano-7-deazaguanine reductase, found in Rhizobium johnstonii (strain DSM 114642 / LMG 32736 / 3841) (Rhizobium leguminosarum bv. viciae).